Reading from the N-terminus, the 240-residue chain is 2,3,4,5-tetrahydropyridine-2,6-dicarboxylate N-acetyltransferase (240 aa).

This sequence belongs to the transferase hexapeptide repeat family. DapH subfamily.

It carries out the reaction (S)-2,3,4,5-tetrahydrodipicolinate + acetyl-CoA + H2O = L-2-acetamido-6-oxoheptanedioate + CoA. It functions in the pathway amino-acid biosynthesis; L-lysine biosynthesis via DAP pathway; LL-2,6-diaminopimelate from (S)-tetrahydrodipicolinate (acetylase route): step 1/3. Functionally, catalyzes the transfer of an acetyl group from acetyl-CoA to tetrahydrodipicolinate. In Bacillus cereus (strain AH187), this protein is 2,3,4,5-tetrahydropyridine-2,6-dicarboxylate N-acetyltransferase.